The chain runs to 373 residues: L-threonine 3-dehydrogenase, mitochondrial (373 aa).

NAD(+) is bound by residues 62–67, 88–90, 106–107, Tyr-195, Lys-199, and Ile-225; these read GGLGQL, DIR, and DI. The Proton donor/acceptor role is filled by Tyr-195.

Belongs to the NAD(P)-dependent epimerase/dehydratase family. Homodimer.

The protein localises to the mitochondrion. The catalysed reaction is L-threonine + NAD(+) = (2S)-2-amino-3-oxobutanoate + NADH + H(+). It functions in the pathway amino-acid degradation; L-threonine degradation via oxydo-reductase pathway; glycine from L-threonine: step 1/2. In terms of biological role, catalyzes the NAD(+)-dependent oxidation of L-threonine to 2-amino-3-ketobutyrate, mediating L-threonine catabolism. This is L-threonine 3-dehydrogenase, mitochondrial from Bos taurus (Bovine).